The following is a 339-amino-acid chain: GTP 3',8-cyclase (339 aa).

Residues Arg-13 to Ala-249 enclose the Radical SAM core domain. Position 22 (Arg-22) interacts with GTP. Residues Cys-29 and Cys-33 each coordinate [4Fe-4S] cluster. Tyr-35 lines the S-adenosyl-L-methionine pocket. A [4Fe-4S] cluster-binding site is contributed by Cys-36. Residue Arg-75 coordinates GTP. Gly-79 serves as a coordination point for S-adenosyl-L-methionine. Thr-106 serves as a coordination point for GTP. Ser-130 contacts S-adenosyl-L-methionine. Lys-168 lines the GTP pocket. S-adenosyl-L-methionine is bound at residue Met-202. [4Fe-4S] cluster contacts are provided by Cys-266 and Cys-269. A GTP-binding site is contributed by Arg-271–Arg-273. Residue Cys-283 participates in [4Fe-4S] cluster binding.

It belongs to the radical SAM superfamily. MoaA family. In terms of assembly, monomer and homodimer. [4Fe-4S] cluster serves as cofactor.

The enzyme catalyses GTP + AH2 + S-adenosyl-L-methionine = (8S)-3',8-cyclo-7,8-dihydroguanosine 5'-triphosphate + 5'-deoxyadenosine + L-methionine + A + H(+). It functions in the pathway cofactor biosynthesis; molybdopterin biosynthesis. In terms of biological role, catalyzes the cyclization of GTP to (8S)-3',8-cyclo-7,8-dihydroguanosine 5'-triphosphate. The polypeptide is GTP 3',8-cyclase (Xanthomonas campestris pv. campestris (strain B100)).